A 483-amino-acid polypeptide reads, in one-letter code: Glutamyl-tRNA(Gln) amidotransferase subunit A (483 aa).

Residues Lys-76 and Ser-151 each act as charge relay system in the active site. Catalysis depends on Ser-175, which acts as the Acyl-ester intermediate.

Belongs to the amidase family. GatA subfamily. As to quaternary structure, heterotrimer of A, B and C subunits.

It catalyses the reaction L-glutamyl-tRNA(Gln) + L-glutamine + ATP + H2O = L-glutaminyl-tRNA(Gln) + L-glutamate + ADP + phosphate + H(+). Its function is as follows. Allows the formation of correctly charged Gln-tRNA(Gln) through the transamidation of misacylated Glu-tRNA(Gln) in organisms which lack glutaminyl-tRNA synthetase. The reaction takes place in the presence of glutamine and ATP through an activated gamma-phospho-Glu-tRNA(Gln). This Ectopseudomonas mendocina (strain ymp) (Pseudomonas mendocina) protein is Glutamyl-tRNA(Gln) amidotransferase subunit A.